Reading from the N-terminus, the 291-residue chain is MTAITASMVKELRDRTGLAMMECKKALTEANGDIELAIDNLRKSGQAKAAKKAGNIAADGAITIVQDGNKAILVEVNCQTDFVAKDENFSNFAHTVAAAALAAGETDAAKIAELKLADGQSVEEARIALVQKIGENIQVRRAKIVEGEQLAIYKHGLKIGVVVSYTGDADTGKGIAMHVAAFNPVAVNAEAVPADLIAKEKEIAEAKALESGKPANIVEKMVTGSVEKYLNEVALDRQMYVIDNEKKVADVLKATGTNVANFVRFEVGEGIEKKAELSFAEEVAAAQAAAK.

Residues 80 to 83 are involved in Mg(2+) ion dislocation from EF-Tu; it reads TDFV.

It belongs to the EF-Ts family.

It is found in the cytoplasm. Functionally, associates with the EF-Tu.GDP complex and induces the exchange of GDP to GTP. It remains bound to the aminoacyl-tRNA.EF-Tu.GTP complex up to the GTP hydrolysis stage on the ribosome. The protein is Elongation factor Ts of Acinetobacter baumannii (strain AB307-0294).